Here is a 320-residue protein sequence, read N- to C-terminus: Methionyl-tRNA formyltransferase (320 aa).

117 to 120 (SLLP) lines the (6S)-5,6,7,8-tetrahydrofolate pocket.

It belongs to the Fmt family.

It carries out the reaction L-methionyl-tRNA(fMet) + (6R)-10-formyltetrahydrofolate = N-formyl-L-methionyl-tRNA(fMet) + (6S)-5,6,7,8-tetrahydrofolate + H(+). Functionally, attaches a formyl group to the free amino group of methionyl-tRNA(fMet). The formyl group appears to play a dual role in the initiator identity of N-formylmethionyl-tRNA by promoting its recognition by IF2 and preventing the misappropriation of this tRNA by the elongation apparatus. This chain is Methionyl-tRNA formyltransferase, found in Bordetella petrii (strain ATCC BAA-461 / DSM 12804 / CCUG 43448).